We begin with the raw amino-acid sequence, 212 residues long: Thymidylate kinase (212 aa).

11 to 18 (GPEGAGKT) is an ATP binding site.

It belongs to the thymidylate kinase family.

The catalysed reaction is dTMP + ATP = dTDP + ADP. In terms of biological role, phosphorylation of dTMP to form dTDP in both de novo and salvage pathways of dTTP synthesis. The sequence is that of Thymidylate kinase from Streptococcus pneumoniae (strain ATCC 700669 / Spain 23F-1).